The chain runs to 132 residues: uncharacterized protein (132 aa).

A disordered region spans residues 68 to 91 (WSRTSPNSSRSSPRSPASMASTSS).

This is an uncharacterized protein from Streptomyces cacaoi.